A 151-amino-acid polypeptide reads, in one-letter code: Superoxide dismutase [Cu-Zn] 4 (151 aa).

Cu cation is bound by residues His45, His47, and His62. A disulfide bridge links Cys56 with Cys145. Zn(2+)-binding residues include His62, His70, His79, and Asp82. Cu cation is bound at residue His120.

Belongs to the Cu-Zn superoxide dismutase family. Homodimer. Cu cation serves as cofactor. Zn(2+) is required as a cofactor.

It localises to the cytoplasm. It carries out the reaction 2 superoxide + 2 H(+) = H2O2 + O2. Destroys radicals which are normally produced within the cells and which are toxic to biological systems. Protects spores from cellular damage caused by UV LIGHT. The chain is Superoxide dismutase [Cu-Zn] 4 (sodD) from Dictyostelium discoideum (Social amoeba).